A 150-amino-acid chain; its full sequence is MGLHIGSLLICVFLGILPFATANTNRSGYEEQRNYLLNIFHNPLVNDSIKEKNIPELIAFYQRYPTDVPLSDADRQQFERFIHDYREYREVLVDGVPPQGGSFGNIFGHFLGRVGTRYISSLFNKKREEGQSNHANSPTTLPSRIQKMTK.

Positions 1–22 (MGLHIGSLLICVFLGILPFATA) are cleaved as a signal peptide. Residues 127–150 (REEGQSNHANSPTTLPSRIQKMTK) are disordered. Residues 132-150 (SNHANSPTTLPSRIQKMTK) show a composition bias toward polar residues.

The protein belongs to the Turandot family.

It localises to the secreted. Functionally, a humoral factor that may play a role in stress tolerance. This chain is Protein Turandot X, found in Drosophila simulans (Fruit fly).